The primary structure comprises 131 residues: Cruxhalorhodopsin-1 (131 aa).

A helical transmembrane segment spans residues 1-11 (PMILLALGLLA). The Cytoplasmic portion of the chain corresponds to 12-14 (DTD). The helical transmembrane segment at 15–38 (IASLFTAITMDIGMCVTGLAAALI) threads the bilayer. Residues 39 to 41 (TSS) lie on the Extracellular side of the membrane. Residues 42–64 (HLLRWVFYGISCAFFVAVLYVLL) form a helical membrane-spanning segment. At 65–76 (VQWPADAEAAGT) the chain is on the cytoplasmic side. Residues 77–100 (SEIFGTLKILTVVLWLGYPILWAL) form a helical membrane-spanning segment. Residues 101–109 (GSEGVALLS) lie on the Extracellular side of the membrane. The chain crosses the membrane as a helical span at residues 110-131 (VGVTSWGYSGLDILAKYVFAFI). An N6-(retinylidene)lysine modification is found at Lys125.

This sequence belongs to the archaeal/bacterial/fungal opsin family.

Its subcellular location is the cell membrane. Its function is as follows. Light-driven chloride pump. The chain is Cruxhalorhodopsin-1 (choP1) from Haloarcula argentinensis.